The sequence spans 122 residues: Riboflavin kinase (122 aa).

Position 4 to 9 (glycine 4 to alanine 9) interacts with CDP. Mg(2+)-binding residues include threonine 33 and asparagine 35. Positions 84 and 92 each coordinate FMN. Valine 97–arginine 100 serves as a coordination point for CDP.

Belongs to the archaeal riboflavin kinase family. Mg(2+) serves as cofactor.

It carries out the reaction riboflavin + CTP = CDP + FMN + H(+). The protein operates within cofactor biosynthesis; FMN biosynthesis; FMN from riboflavin (CTP route): step 1/1. Catalyzes the CTP-dependent phosphorylation of riboflavin (vitamin B2) to form flavin mononucleotide (FMN). This is Riboflavin kinase from Methanothermobacter thermautotrophicus (strain ATCC 29096 / DSM 1053 / JCM 10044 / NBRC 100330 / Delta H) (Methanobacterium thermoautotrophicum).